The primary structure comprises 877 residues: Probable linoleate 9S-lipoxygenase 4 (877 aa).

The PLAT domain maps to 38-165 (GDFHASLLDG…NYQYERVFFA (128 aa)). Positions 168–877 (TYLPSKMPAP…AMGIPNSISI (710 aa)) constitute a Lipoxygenase domain. Positions 229-252 (GSQELPYPRRGRTGRAPTKTDPNT) are disordered. His528, His533, His719, Asn723, and Ile877 together coordinate Fe cation.

Belongs to the lipoxygenase family. Fe cation serves as cofactor.

It catalyses the reaction (9Z,12Z)-octadecadienoate + O2 = (9S)-hydroperoxy-(10E,12Z)-octadecadienoate. It participates in lipid metabolism; oxylipin biosynthesis. In terms of biological role, plant lipoxygenase may be involved in a number of diverse aspects of plant physiology including growth and development, pest resistance, and senescence or responses to wounding. Catalyzes the hydroperoxidation of lipids containing a cis,cis-1,4-pentadiene structure. The protein is Probable linoleate 9S-lipoxygenase 4 of Oryza sativa subsp. japonica (Rice).